The primary structure comprises 182 residues: Ribosome maturation factor RimM (182 aa).

In terms of domain architecture, PRC barrel spans 103 to 182 (VGDYYWKDLI…TIEVDWDPGF (80 aa)).

The protein belongs to the RimM family. As to quaternary structure, binds ribosomal protein uS19.

The protein resides in the cytoplasm. Functionally, an accessory protein needed during the final step in the assembly of 30S ribosomal subunit, possibly for assembly of the head region. Essential for efficient processing of 16S rRNA. May be needed both before and after RbfA during the maturation of 16S rRNA. It has affinity for free ribosomal 30S subunits but not for 70S ribosomes. The sequence is that of Ribosome maturation factor RimM from Pectobacterium atrosepticum (strain SCRI 1043 / ATCC BAA-672) (Erwinia carotovora subsp. atroseptica).